The primary structure comprises 454 residues: Phenylalanine--tRNA ligase, mitochondrial (454 aa).

Residues 141 to 144, R163, 170 to 172, 177 to 179, E266, and F291 contribute to the substrate site; these read SAHQ, VHY, and QME. The interval 327–347 is disordered; sequence KSISTSSSSSSSSSSSSSSTL. A compositionally biased stretch (low complexity) spans 328 to 347; sequence SISTSSSSSSSSSSSSSSTL. An FDX-ACB domain is found at 361-454; that stretch reads SKYPSCFKDV…LENHLSVKLR (94 aa).

Belongs to the class-II aminoacyl-tRNA synthetase family. As to quaternary structure, monomer.

Its subcellular location is the mitochondrion matrix. It carries out the reaction tRNA(Phe) + L-phenylalanine + ATP = L-phenylalanyl-tRNA(Phe) + AMP + diphosphate + H(+). Is responsible for the charging of tRNA(Phe) with phenylalanine in mitochondrial translation. The sequence is that of Phenylalanine--tRNA ligase, mitochondrial (mpheS) from Dictyostelium discoideum (Social amoeba).